The following is a 940-amino-acid chain: Serine/threonine-protein phosphatase 1 regulatory subunit 10 (940 aa).

The interval 1 to 348 (MGSGPIDPKE…EPAPPSEAMD (348 aa)) is interaction with TOX4. The 75-residue stretch at 73–147 (KLLNNWLTYS…SDWMAVIRSQ (75 aa)) folds into the TFIIS N-terminal domain. 4 disordered regions span residues 147–211 (QSST…FRST), 247–270 (SNVAAPGDATPPAEKKYKPLNTTP), 304–400 (KIKK…KSVT), and 533–905 (YVET…HGGD). Composition is skewed to basic and acidic residues over residues 153–166 (AEKDKKKRKDEGKS) and 174–196 (PLTEVKAETRAEEAPEKKREKPK). K179 is covalently cross-linked (Glycyl lysine isopeptide (Lys-Gly) (interchain with G-Cter in SUMO2)). Phosphothreonine is present on T256. A Glycyl lysine isopeptide (Lys-Gly) (interchain with G-Cter in SUMO2) cross-link involves residue K262. Phosphoserine is present on S313. Residues 325 to 336 (KTSTEPSTAKPS) show a composition bias toward low complexity. A necessary for interaction with PPP1CA region spans residues 357 to 433 (PPVEVPELMD…NKIKDFGEAA (77 aa)). At S382 the chain carries Phosphoserine. The tract at residues 393-408 (GRKRKSVTWPEEGKLR) is necessary for interaction with PPP1CC. A PP1-binding motif motif is present at residues 394-423 (RKRKSVTWPEEGKLREYFYFELDETERVNV). A Phosphoserine; by PKA modification is found at S398. Positions 418–619 (TERVNVNKIK…IKQMLVPHGL (202 aa)) are interaction with WDR82. 2 stretches are compositionally biased toward gly residues: residues 540-551 (GGSGGSPDGAGG) and 565-579 (MGAGKGPQGPGGGGI). S545 is modified (phosphoserine). Polar residues predominate over residues 583 to 595 (EILTSIMGSPNSH). S591 bears the Phosphoserine mark. Positions 596 to 611 (PSEELLKQPDYSDKIK) are enriched in basic and acidic residues. Over residues 644–655 (PPGPGGPMPGPH) the composition is skewed to pro residues. R665 is modified (omega-N-methylarginine). Positions 676 to 690 (GDPFWDGPGDPMRGG) are enriched in low complexity. At R693 the chain carries Omega-N-methylarginine. The span at 714–723 (EPPPPPPPPF) shows a compositional bias: pro residues. Composition is skewed to gly residues over residues 726-764 (ARGGRSGGGPPNGRGGPGGGMVGGGGHRPHEGPGGGMGN) and 790-845 (SSMG…GSGG). At R739 the chain carries Omega-N-methylarginine. 2 stretches are compositionally biased toward basic and acidic residues: residues 862-886 (PHDVPGHRGHDHRGPPHEHRGHDGP) and 894-903 (RGHDGGHSHG). Residues 906-934 (MSNRPVCRHFMMKGNCRYENNCAFYHPGV) form a C3H1-type zinc finger.

Component of the PNUTS-PP1 complex (also named PTW/PP1 complex), composed of PPP1R10/PNUTS, TOX4, WDR82, and PPP1CA (or PPP1CB or PPP1CC). Post-translationally, phosphorylated on Ser-398 by PKA within the region necessary for interaction with PPP1CA.

It is found in the nucleus. The protein localises to the chromosome. In terms of biological role, substrate-recognition component of the PNUTS-PP1 protein phosphatase complex, a protein phosphatase 1 (PP1) complex that promotes RNA polymerase II transcription pause-release, allowing transcription elongation. Promoter-proximal pausing by RNA polymerase II is a transcription halt following transcription initiation but prior to elongation, which acts as a checkpoint to control that transcripts are favorably configured for transcriptional elongation. The PNUTS-PP1 complex mediates the release of RNA polymerase II from promoter-proximal region of genes by catalyzing dephosphorylation of proteins involved in transcription, such as AFF4, CDK9, MEPCE, INTS12, NCBP1, POLR2M/GDOWN1 and SUPT6H. The PNUTS-PP1 complex also regulates RNA polymerase II transcription termination by mediating dephosphorylation of SUPT5H in termination zones downstream of poly(A) sites, thereby promoting deceleration of RNA polymerase II transcription. PNUTS-PP1 complex is also involved in the response to replication stress by mediating dephosphorylation of POLR2A at 'Ser-5' of the CTD, promoting RNA polymerase II degradation. The PNUTS-PP1 complex also plays a role in the control of chromatin structure and cell cycle progression during the transition from mitosis into interphase. PNUTS-PP1 complex mediates dephosphorylation of MYC, promoting MYC stability by preventing MYC ubiquitination by the SCF(FBXW7) complex. In addition to acts as a substrate-recognition component, PPP1R10/PNUTS also acts as a nuclear targeting subunit for the PNUTS-PP1 complex. In some context, PPP1R10/PNUTS also acts as an inhibitor of protein phosphatase 1 (PP1) activity by preventing access to substrates, such as RB. This is Serine/threonine-protein phosphatase 1 regulatory subunit 10 (PPP1R10) from Macaca mulatta (Rhesus macaque).